We begin with the raw amino-acid sequence, 368 residues long: tRNA-specific 2-thiouridylase MnmA (368 aa).

Residues 12-19 (GMSGGVDS) and Met38 contribute to the ATP site. Residues 98–100 (NPD) are interaction with target base in tRNA. Residue Cys103 is the Nucleophile of the active site. Residues Cys103 and Cys200 are joined by a disulfide bond. Gly128 is an ATP binding site. Residues 150 to 152 (KDQ) are interaction with tRNA. Cys200 acts as the Cysteine persulfide intermediate in catalysis. The interval 311 to 312 (RY) is interaction with tRNA.

The protein belongs to the MnmA/TRMU family.

The protein localises to the cytoplasm. The enzyme catalyses S-sulfanyl-L-cysteinyl-[protein] + uridine(34) in tRNA + AH2 + ATP = 2-thiouridine(34) in tRNA + L-cysteinyl-[protein] + A + AMP + diphosphate + H(+). Functionally, catalyzes the 2-thiolation of uridine at the wobble position (U34) of tRNA, leading to the formation of s(2)U34. This is tRNA-specific 2-thiouridylase MnmA from Aeromonas hydrophila subsp. hydrophila (strain ATCC 7966 / DSM 30187 / BCRC 13018 / CCUG 14551 / JCM 1027 / KCTC 2358 / NCIMB 9240 / NCTC 8049).